Reading from the N-terminus, the 224-residue chain is Envelope glycoprotein L (224 aa).

Positions 1-22 are cleaved as a signal peptide; the sequence is MGILGWVGLIAVGVLCVRGGLS. The interaction with gH stretch occupies residues 20–161; the sequence is GLSSTEYVIR…FDYSRTRRCV (142 aa). Residues 20–161 are interaction with gL; that stretch reads GLSSTEYVIR…FDYSRTRRCV (142 aa). Residues 23–201 form the gL alphaherpesvirus-type domain; the sequence is STEYVIRSRV…LTTPPPIIAT (179 aa). Disulfide bonds link C44-C76 and C149-C160. Positions 161-224 are disordered; sequence VGRQDLGPTN…RRRRPHSRRL (64 aa). Residue N170 is glycosylated (N-linked (GlcNAc...) asparagine; by host). A compositionally biased stretch (basic residues) spans 213-224; the sequence is KSRRRRPHSRRL.

The protein belongs to the herpesviridae glycoprotein L (gL) family. Alphaherpesvirinae gL subfamily. Interacts with glycoprotein H (gH); this interaction is necessary for the correct processing and cell surface expression of gH. The heterodimer gH/gL seems to interact with gB trimers during fusion. Post-translationally, N-glycosylated, O-glycosylated, and sialylated.

The protein resides in the virion membrane. It is found in the host cell membrane. The protein localises to the host Golgi apparatus. It localises to the host trans-Golgi network. Its function is as follows. The heterodimer glycoprotein H-glycoprotein L is required for the fusion of viral and plasma membranes leading to virus entry into the host cell. Acts as a functional inhibitor of gH and maintains gH in an inhibited form. Upon binding to host integrins, gL dissociates from gH leading to activation of the viral fusion glycoproteins gB and gH. The protein is Envelope glycoprotein L of Human herpesvirus 1 (strain KOS) (HHV-1).